The following is a 1238-amino-acid chain: Cryptic loci regulator protein 1 (1238 aa).

6 disordered regions span residues 133-156, 196-237, 277-303, 546-568, 696-735, and 784-824; these read TQQQ…TEPN, PFSN…PSSI, ASLY…LGSM, QKSV…IDTT, SDNT…PFVH, and TLKE…QSRS. The span at 214 to 223 shows a compositional bias: polar residues; that stretch reads NVKNNSKKTA. A compositionally biased stretch (low complexity) spans 224-237; that stretch reads SSVNSNHSSIPSSI. The span at 291–303 shows a compositional bias: polar residues; that stretch reads SSRNTSSYNLGSM. Residues 702–723 are compositionally biased toward low complexity; that stretch reads SLPKPSNSKLSSISSDGDASSN. Over residues 785 to 796 the composition is skewed to basic and acidic residues; sequence LKEDASSTKQAK. Positions 810 to 819 are enriched in polar residues; the sequence is NDVSKNNSGE. The segment at 1062–1087 adopts a C2H2-type zinc-finger fold; the sequence is LNCEVSNCKKCFSNYEDMFKHLQHSH.

Interacts with clr3.

The protein localises to the nucleus. The protein resides in the chromosome. Its subcellular location is the centromere. It localises to the telomere. Functionally, regulates silencing of the mat2 and mat3 loci. Organizes the chromatin structure of the mating-type region where it also participates in establishing the 'cold spot' for recombination. Required for proper positioning of nucleosomes at heterochromatic loci and for transcriptional gene silencing (TGS) function of the Snf2/Hdac-containing repressor complex (SHREC). The sequence is that of Cryptic loci regulator protein 1 (clr1) from Schizosaccharomyces pombe (strain 972 / ATCC 24843) (Fission yeast).